The primary structure comprises 246 residues: Homeobox protein SIX6 (246 aa).

Residues 126 to 186 (WDGEQKTHCF…KNRRQRDRAA (61 aa)) constitute a DNA-binding region (homeobox). The disordered stretch occupies residues 190 to 246 (NRLQQQVLSQGPGRVLRSEGEGTPEVLGVASSPAASLSSKAATSAISITSSDSECDI). Phosphothreonine is present on Thr-212. The segment covering 219–246 (ASSPAASLSSKAATSAISITSSDSECDI) has biased composition (low complexity). 4 positions are modified to phosphoserine: Ser-221, Ser-225, Ser-227, and Ser-228.

Belongs to the SIX/Sine oculis homeobox family. In terms of assembly, interacts with TLE4 and TLE5. In terms of tissue distribution, in the developing embryo, expressed mainly in the ventral optic stalk, optic chiasma, the neural retina and the primordial tissues that give rise to the pituitary/hypothalamus axis. Not expressed in the lens placode.

It is found in the nucleus. Functionally, may be involved in eye development. This Mus musculus (Mouse) protein is Homeobox protein SIX6 (Six6).